An 89-amino-acid polypeptide reads, in one-letter code: MATELEKALSNVIEVYHNYSGIKGNHHALYRDDFRKMVTTECPQFVQNKNTESLFKELDVNSDNAINFEEFLVLVIRVGVAAHKDSHKE.

N-acetylalanine is present on A2. EF-hand domains lie at 13-48 (IEVY…FVQN) and 46-81 (VQNK…VGVA). H17 and H27 together coordinate Zn(2+). D33 lines the Ca(2+) pocket. C42 is subject to S-nitrosocysteine. D59, N61, D63, and E70 together coordinate Ca(2+). H83 contributes to the Zn(2+) binding site.

Belongs to the S-100 family. As to quaternary structure, homodimer. Preferentially exists as a heterodimer or heterotetramer with S100A9 known as calprotectin (S100A8/A9). S100A8 interacts with AGER, ATP2A2 and with the heterodimeric complex formed by TLR4 and LY96. Calprotectin (S100A8/9) interacts with CEACAM3 and tubulin filaments in a calcium-dependent manner. Heterotetrameric calprotectin (S100A8/A9) interacts with ANXA6 and associates with tubulin filaments in activated monocytes. S100A8 and calprotectin (S100A8/9) interact with NCF2/P67PHOX, RAC1 and RAC2. Calprotectin (S100A8/9) interacts with CYBA and CYBB. Calprotectin (S100A8/9) interacts with NOS2 to form the iNOS-S100A8/A9 transnitrosylase complex. Calprotectin (S100A8/9) interacts with CD69.

It is found in the secreted. The protein localises to the cytoplasm. Its subcellular location is the cytoskeleton. The protein resides in the cell membrane. S100A8 is a calcium- and zinc-binding protein which plays a prominent role in the regulation of inflammatory processes and immune response. It can induce neutrophil chemotaxis and adhesion. Predominantly found as calprotectin (S100A8/A9) which has a wide plethora of intra- and extracellular functions. The intracellular functions include: facilitating leukocyte arachidonic acid trafficking and metabolism, modulation of the tubulin-dependent cytoskeleton during migration of phagocytes and activation of the neutrophilic NADPH-oxidase. Also participates in regulatory T-cell differentiation together with CD69. Activates NADPH-oxidase by facilitating the enzyme complex assembly at the cell membrane, transferring arachidonic acid, an essential cofactor, to the enzyme complex and S100A8 contributes to the enzyme assembly by directly binding to NCF2/P67PHOX. The extracellular functions involve pro-inflammatory, antimicrobial, oxidant-scavenging and apoptosis-inducing activities. Its pro-inflammatory activity includes recruitment of leukocytes, promotion of cytokine and chemokine production, and regulation of leukocyte adhesion and migration. Acts as an alarmin or a danger associated molecular pattern (DAMP) molecule and stimulates innate immune cells via binding to pattern recognition receptors such as Toll-like receptor 4 (TLR4) and receptor for advanced glycation endproducts (AGER). Binding to TLR4 and AGER activates the MAP-kinase and NF-kappa-B signaling pathways resulting in the amplification of the pro-inflammatory cascade. Has antimicrobial activity towards bacteria and fungi and exerts its antimicrobial activity probably via chelation of Zn(2+) which is essential for microbial growth. Can induce cell death via autophagy and apoptosis and this occurs through the cross-talk of mitochondria and lysosomes via reactive oxygen species (ROS) and the process involves BNIP3. Can regulate neutrophil number and apoptosis by an anti-apoptotic effect; regulates cell survival via ITGAM/ITGB and TLR4 and a signaling mechanism involving MEK-ERK. Its role as an oxidant scavenger has a protective role in preventing exaggerated tissue damage by scavenging oxidants. The iNOS-S100A8/A9 transnitrosylase complex is proposed to direct selective inflammatory stimulus-dependent S-nitrosylation of multiple targets such as GAPDH, ANXA5, EZR, MSN and VIM by recognizing a [IL]-x-C-x-x-[DE] motif; S100A8 seems to contribute to S-nitrosylation site selectivity. This Rattus norvegicus (Rat) protein is Protein S100-A8 (S100a8).